The sequence spans 482 residues: Argininosuccinate synthase (482 aa).

ATP-binding positions include 17–25 and A43; that span reads AFSGGLDTS. Position 99 (Y99) interacts with L-citrulline. ATP is bound by residues G129 and T131. L-aspartate is bound by residues T131, N135, and D136. N135 contacts L-citrulline. D136 provides a ligand contact to ATP. L-citrulline-binding residues include R139 and S192. Residue D194 participates in ATP binding. L-citrulline-binding residues include T201, E203, and E280. The interval 461-482 is disordered; that stretch reads SRGEATDEETMLDRAAMESGTD.

The protein belongs to the argininosuccinate synthase family. Type 2 subfamily. As to quaternary structure, homotetramer.

The protein resides in the cytoplasm. The catalysed reaction is L-citrulline + L-aspartate + ATP = 2-(N(omega)-L-arginino)succinate + AMP + diphosphate + H(+). It participates in amino-acid biosynthesis; L-arginine biosynthesis; L-arginine from L-ornithine and carbamoyl phosphate: step 2/3. In Streptomyces lavendulae, this protein is Argininosuccinate synthase (argG).